The sequence spans 1541 residues: WD repeat-containing protein 62 (1541 aa).

Ala-2 bears the N-acetylalanine mark. Position 33 is a phosphoserine (Ser-33). Position 46 is a phosphothreonine (Thr-46). WD repeat units lie at residues 109 to 150, 153 to 194, 196 to 234, 291 to 330, 357 to 396, 402 to 450, 490 to 529, 532 to 574, 578 to 618, 626 to 665, 671 to 713, and 714 to 752; these read TARK…QVAE, GHKY…VVAS, KVSCRVIALSFSEDSSYFVTVGNRHVRFWFLEVSTEAKV, INLKVSLSSCLCVSQELIFCGCTDGIVRIFQAHSLHYLAN, AVYPDTVALTFDPNHQWLSCVYKDHSIYIWDVKDINKVGK, FHSS…DSHW, DMKAGVRVMQVSPDGQHLASGDRSGNLRIHELHFMDELVR, AHDA…SLEQ, DHSS…DGLH, AEKTTLYDMDIDITQKYVAVACQDRNVRVYNTVNGKQKKC, GDEG…KMFG, and HSEIITGMKFTYDCRHLITVSGDSCVFIWHLGPEITNCM. Residue Ser-501 is modified to Phosphoserine. Disordered stretches follow at residues 762-820 and 911-1050; these read REQP…KESL and LSQS…LPQT. A compositionally biased stretch (basic and acidic residues) spans 770-780; sequence KDGKWSRDPRQ. Residues 781–795 are compositionally biased toward polar residues; the sequence is ETCTSMPSEISLSPG. The segment covering 797-809 has biased composition (acidic residues); the sequence is QTEDELEEECEPE. Residues 803–846 form a WD 13 repeat; that stretch reads EEECEPEELLKTPSKESLDSDPRCLLTNGKLPLWAKRLLGDDDV. Positions 810–820 are enriched in basic and acidic residues; sequence ELLKTPSKESL. Positions 937–948 are enriched in low complexity; the sequence is VSELLCSLESEV. At Ser-943 the chain carries Phosphoserine. Positions 1008 to 1026 are enriched in pro residues; the sequence is PPRPDPDPPFDVAVPPAPG. Thr-1050 bears the Phosphothreonine mark. Residues Ser-1095, Ser-1125, and Ser-1151 each carry the phosphoserine modification. 2 disordered regions span residues 1133-1153 and 1185-1212; these read LAGSQPRAEPLRAGTGYTSPG and SSSSVPPTDKTPPTPTALPTPGLAQGVH. A WD 14 repeat occupies 1138-1180; it reads PRAEPLRAGTGYTSPGRTNVLSAGKAEEPLEAWSPLTSCLTGL. Pro residues predominate over residues 1193–1202; the sequence is DKTPPTPTAL. A phosphoserine mark is found at Ser-1235, Ser-1255, and Ser-1256. The disordered stretch occupies residues 1273 to 1293; it reads TVTPSSDSEGQEPALPSRGNH. Phosphothreonine is present on Thr-1275.

Can form homodimers (via C-terminus). Interacts (via C-terminus) with MAPKBP1 (via C-terminus). Interacts with CDK5RAP2, CEP152, CEP63 and KIAA0753. CEP63, CDK5RAP2, CEP152, WDR62 are proposed to form a stepwise assembled complex at the centrosome forming a ring near parental centrioles.

The protein resides in the nucleus. Its subcellular location is the cytoplasm. The protein localises to the cytoskeleton. It localises to the spindle pole. It is found in the microtubule organizing center. The protein resides in the centrosome. Its subcellular location is the centriole. Required for cerebral cortical development. Plays a role in neuronal proliferation and migration. Plays a role in mother-centriole-dependent centriole duplication; the function seems also to involve CEP152, CDK5RAP2 and CEP63 through a stepwise assembled complex at the centrosome that recruits CDK2 required for centriole duplication. The protein is WD repeat-containing protein 62 (WDR62) of Sus scrofa (Pig).